A 164-amino-acid chain; its full sequence is Peptidyl-prolyl cis-trans isomerase A-like 4G (164 aa).

Residues 7–163 (FFDITVDGKP…KKITIADCGQ (157 aa)) form the PPIase cyclophilin-type domain.

The protein belongs to the cyclophilin-type PPIase family. PPIase A subfamily.

It is found in the cytoplasm. It catalyses the reaction [protein]-peptidylproline (omega=180) = [protein]-peptidylproline (omega=0). Functionally, PPIases accelerate the folding of proteins. It catalyzes the cis-trans isomerization of proline imidic peptide bonds in oligopeptides. This Homo sapiens (Human) protein is Peptidyl-prolyl cis-trans isomerase A-like 4G (PPIAL4G).